The following is a 598-amino-acid chain: Elongation factor 4 (598 aa).

Residues 4–186 (KHIRNFSIIA…VIVRQIPPPE (183 aa)) form the tr-type G domain. Residues 16–21 (DHGKST) and 133–136 (NKID) each bind GTP.

The protein belongs to the TRAFAC class translation factor GTPase superfamily. Classic translation factor GTPase family. LepA subfamily.

Its subcellular location is the cell inner membrane. The catalysed reaction is GTP + H2O = GDP + phosphate + H(+). Its function is as follows. Required for accurate and efficient protein synthesis under certain stress conditions. May act as a fidelity factor of the translation reaction, by catalyzing a one-codon backward translocation of tRNAs on improperly translocated ribosomes. Back-translocation proceeds from a post-translocation (POST) complex to a pre-translocation (PRE) complex, thus giving elongation factor G a second chance to translocate the tRNAs correctly. Binds to ribosomes in a GTP-dependent manner. This Pseudoalteromonas atlantica (strain T6c / ATCC BAA-1087) protein is Elongation factor 4.